Here is a 1250-residue protein sequence, read N- to C-terminus: SRC kinase signaling inhibitor 1 (1250 aa).

Basic and acidic residues predominate over residues 19-45; sequence AEGRARSPREEVGPRDPGGRGEPDPER. Residues 19–78 form a disordered region; that stretch reads AEGRARSPREEVGPRDPGGRGEPDPERSSPPMLSADDAEYPREYRTLGGGGGGGSGGRRF. Residues serine 47 and serine 52 each carry the phosphoserine modification. The span at 65 to 75 shows a compositional bias: gly residues; sequence LGGGGGGGSGG. Position 79 is a phosphoserine (serine 79). Threonine 86 carries the post-translational modification Phosphothreonine. Phosphoserine occurs at positions 87, 98, 211, 233, 237, 247, and 293. Tyrosine 309 is subject to Phosphotyrosine. The segment at 352 to 448 is disordered; that stretch reads ASRESSPTRR…RRDVKPDEDL (97 aa). Positions 354 to 364 are enriched in polar residues; sequence RESSPTRRLNN. A compositionally biased stretch (low complexity) spans 365–374; that stretch reads LSPASHLASS. 3 positions are modified to phosphoserine: serine 366, serine 375, and serine 392. A compositionally biased stretch (low complexity) spans 381-399; the sequence is PSGLPSGLPSGSPSRSRLS. Residues arginine 397 and arginine 404 each carry the omega-N-methylarginine modification. Residues serine 411, serine 430, and serine 432 each carry the phosphoserine modification. Positions 437–448 are enriched in basic and acidic residues; the sequence is LERRDVKPDEDL. Tyrosine 464 carries the phosphotyrosine modification. The tract at residues 538–710 is disordered; the sequence is PSSPQKLADV…ASSTPAGQPT (173 aa). Residues 552–563 are compositionally biased toward pro residues; sequence GGPPPPHSPYSG. Phosphoserine is present on residues serine 559, serine 562, and serine 566. Residue arginine 567 is modified to Omega-N-methylarginine. Residues serine 569, serine 579, serine 581, serine 583, and serine 588 each carry the phosphoserine modification. Residues 590 to 607 are compositionally biased toward low complexity; that stretch reads GGKARSTGSASTAGAPPS. Over residues 628 to 640 the composition is skewed to basic and acidic residues; sequence KDTETRERMEAME. Serine 664 and serine 688 each carry phosphoserine. Residues threonine 691 and threonine 704 each carry the phosphothreonine modification. Residues 701–710 show a composition bias toward low complexity; the sequence is ASSTPAGQPT. Coiled-coil stretches lie at residues 712 to 753 and 793 to 813; these read VSRL…RALL and EELI…IQRD. Residues 714–764 are interaction with SNAP25; sequence RLQMQLHLRGLQNSASDLRGQLQQLRNVQLQNQESVRALLKPTEADVSMRV. Residues serine 911 and serine 933 each carry the phosphoserine modification. 2 disordered regions span residues 924-982 and 1016-1094; these read GLDF…ERDW and DCAS…TGEV. The residue at position 951 (threonine 951) is a Phosphothreonine. Serine 1054 bears the Phosphoserine mark. Residues 1069 to 1078 are compositionally biased toward pro residues; sequence KSPPPPPPRR. 2 positions are modified to phosphoserine: serine 1110 and serine 1127. The tract at residues 1155-1250 is disordered; the sequence is ELESGGSSVP…FGARNSSISF (96 aa). A compositionally biased stretch (polar residues) spans 1217-1250; that stretch reads PNETSSPGSEKPSGSRTSIPVLTSFGARNSSISF.

The protein belongs to the SRCIN1 family. As to quaternary structure, interacts with the N-terminal coiled-coil region of SNAP25. Interacts with BCAR1/p130Cas and SRC through its C-terminal domain. Interacts with CSK, CTTN, SORBS3/vinexin, SYP and MAPRE3/EB3. Post-translationally, tyrosine-phosphorylated in response to EGF and to cell adhesion to integrin ligands. As to expression, expressed predominantly in central nervous system with high levels detected in cortex, cerebellum, midbrain and spinal cord (at protein level). Also expressed in testis and epithelial-rich tissues such as mammary gland, lung and kidney.

Its subcellular location is the cytoplasm. It is found in the cytoskeleton. The protein localises to the cell projection. The protein resides in the axon. It localises to the dendrite. Its subcellular location is the presynapse. It is found in the postsynapse. The protein localises to the postsynaptic density. In terms of biological role, acts as a negative regulator of SRC by activating CSK which inhibits SRC activity and downstream signaling, leading to impaired cell spreading and migration. Regulates dendritic spine morphology. Involved in calcium-dependent exocytosis. May play a role in neurotransmitter release or synapse maintenance. The polypeptide is SRC kinase signaling inhibitor 1 (Srcin1) (Mus musculus (Mouse)).